Consider the following 318-residue polypeptide: NADH-ubiquinone oxidoreductase chain 1 (318 aa).

9 helical membrane-spanning segments follow: residues 2 to 22 (FLMNILCLVIPILLAMAFLTL), 37 to 57 (PNIVGPYGLLQPIADAIKLFI), 69 to 89 (LMFTLAPTLAFTLALSLWIPM), 100 to 120 (LGVLFILALSSLAVYSILWSG), 136 to 156 (VAQTISYEVTLAIILLSVMMM), 171 to 191 (HMWLILPLWPLAMMWFISTLA), 231 to 251 (IIMMNALTATLFLGAFHNPLF), 253 to 273 (ELFTVNFITKTLILTAIFLWV), and 293 to 313 (FLPLTLALCMLHVSIPALSAG).

It belongs to the complex I subunit 1 family. In terms of assembly, core subunit of respiratory chain NADH dehydrogenase (Complex I) which is composed of 45 different subunits.

It localises to the mitochondrion inner membrane. The enzyme catalyses a ubiquinone + NADH + 5 H(+)(in) = a ubiquinol + NAD(+) + 4 H(+)(out). In terms of biological role, core subunit of the mitochondrial membrane respiratory chain NADH dehydrogenase (Complex I) which catalyzes electron transfer from NADH through the respiratory chain, using ubiquinone as an electron acceptor. Essential for the catalytic activity and assembly of complex I. This chain is NADH-ubiquinone oxidoreductase chain 1 (MT-ND1), found in Zaedyus pichiy (Pichi).